The sequence spans 243 residues: Tryptophan synthase alpha chain (243 aa).

Catalysis depends on proton acceptor residues Glu31 and Asp42.

This sequence belongs to the TrpA family. As to quaternary structure, tetramer of two alpha and two beta chains.

It carries out the reaction (1S,2R)-1-C-(indol-3-yl)glycerol 3-phosphate + L-serine = D-glyceraldehyde 3-phosphate + L-tryptophan + H2O. It participates in amino-acid biosynthesis; L-tryptophan biosynthesis; L-tryptophan from chorismate: step 5/5. In terms of biological role, the alpha subunit is responsible for the aldol cleavage of indoleglycerol phosphate to indole and glyceraldehyde 3-phosphate. The chain is Tryptophan synthase alpha chain from Staphylococcus epidermidis (strain ATCC 35984 / DSM 28319 / BCRC 17069 / CCUG 31568 / BM 3577 / RP62A).